A 968-amino-acid polypeptide reads, in one-letter code: RNA polymerase-associated protein RapA (968 aa).

The Helicase ATP-binding domain maps to 164 to 334; that stretch reads DVGRRHAPRV…FARLRLLDPN (171 aa). ATP is bound at residue 177–184; it reads DEVGLGKT. The DEAH box signature appears at 280–283; that stretch reads DEAH. The 196-residue stretch at 490-685 folds into the Helicase C-terminal domain; it reads RVEWLMGYLT…ALKAQLEQGR (196 aa).

Belongs to the SNF2/RAD54 helicase family. RapA subfamily. Interacts with the RNAP. Has a higher affinity for the core RNAP than for the holoenzyme. Its ATPase activity is stimulated by binding to RNAP.

In terms of biological role, transcription regulator that activates transcription by stimulating RNA polymerase (RNAP) recycling in case of stress conditions such as supercoiled DNA or high salt concentrations. Probably acts by releasing the RNAP, when it is trapped or immobilized on tightly supercoiled DNA. Does not activate transcription on linear DNA. Probably not involved in DNA repair. This is RNA polymerase-associated protein RapA from Salmonella paratyphi A (strain ATCC 9150 / SARB42).